The chain runs to 448 residues: Exodeoxyribonuclease 7 large subunit (448 aa).

The protein belongs to the XseA family. As to quaternary structure, heterooligomer composed of large and small subunits.

The protein localises to the cytoplasm. It carries out the reaction Exonucleolytic cleavage in either 5'- to 3'- or 3'- to 5'-direction to yield nucleoside 5'-phosphates.. Its function is as follows. Bidirectionally degrades single-stranded DNA into large acid-insoluble oligonucleotides, which are then degraded further into small acid-soluble oligonucleotides. In Shewanella sp. (strain ANA-3), this protein is Exodeoxyribonuclease 7 large subunit.